Here is a 137-residue protein sequence, read N- to C-terminus: MLQPKRTKYRKVHKGRNDGLSWSANAVSFGEYGLKATAHGQLTARQIEAARRSISRYVKRGGKMWIRVFPDKPITKKPIEVRMGSGKGNVEYWVAQIQPGRMIYEIEGVSEEVAREAFRLAAAKLSVTTTFVTRTVR.

This sequence belongs to the universal ribosomal protein uL16 family. As to quaternary structure, part of the 50S ribosomal subunit.

Binds 23S rRNA and is also seen to make contacts with the A and possibly P site tRNAs. This is Large ribosomal subunit protein uL16 from Stenotrophomonas maltophilia (strain K279a).